A 232-amino-acid polypeptide reads, in one-letter code: uncharacterized protein (232 aa).

7 helical membrane passes run 17–37 (FLAK…VFAY), 54–74 (MSFM…SGAL), 84–104 (ALFL…FMIY), 107–127 (GSIV…SVYG), 138–158 (GSYL…NMFF), 161–181 (SGLN…LTAY), and 203–223 (MAVV…LYLL).

The protein belongs to the BI1 family.

It is found in the cell membrane. This is an uncharacterized protein from Borreliella burgdorferi (strain ATCC 35210 / DSM 4680 / CIP 102532 / B31) (Borrelia burgdorferi).